We begin with the raw amino-acid sequence, 479 residues long: Odorant receptor coreceptor (479 aa).

Over 1–43 (MMKMKQQGLVADLLPNIRVMKFFGHFVFNYYDDNSSKYLHKIF) the chain is Cytoplasmic. Residues 44 to 64 (CCVNLFLLLLQFALCAVNLII) form a helical membrane-spanning segment. The Extracellular segment spans residues 65 to 73 (ESADVDDLT). The helical transmembrane segment at 74-94 (ANTITLLFFTHSIVKIIYFAV) threads the bilayer. The Cytoplasmic segment spans residues 95–133 (RSKYFYRTWAIWNNPNSHPLFAESNARYHAIALKKMRLL). Residues 134-154 (LFLVGATTVLSAIAWTVLTFF) form a helical membrane-spanning segment. The Extracellular segment spans residues 155–190 (EHPIRKLVDPVTNETTIIELPQLLLRSYYPFDASKG). N-linked (GlcNAc...) asparagine glycosylation is present at N167. Residues 191–211 (IMHVIVLIYQFYWVLFMLIDA) traverse the membrane as a helical segment. Over 212–350 (NSLDVLFCSW…IVRLVTAVGD (139 aa)) the chain is Cytoplasmic. Residues 261–280 (SAEHLRESENQPPPPVPPQG) form a disordered region. A helical membrane pass occupies residues 351-371 (AYGFALLLHMLTTTITLTLLA). The Extracellular portion of the chain corresponds to 372–383 (YQATKVNGVNVY). The helical transmembrane segment at 384-404 (AASTIGYIIYTFGQVFLFCIF) threads the bilayer. The Cytoplasmic segment spans residues 405 to 455 (GNRLIEESTSVMEAAYSCHWYDGSEEAKTFVQIVCQQCQKAMSISGAKFFT). A helical transmembrane segment spans residues 456–476 (VSLDLFASVLGAVVTYFMVLV). Over 477-479 (QLK) the chain is Extracellular.

Belongs to the insect chemoreceptor superfamily. Heteromeric odorant receptor channel (TC 1.A.69) family. Orco subfamily. In terms of assembly, heterodimer with conventional odorant receptors (ORs).

The protein resides in the cell membrane. Odorant coreceptor which complexes with conventional odorant receptors (ORs) to form odorant-sensing units, providing sensitive and prolonged odorant signaling and calcium permeability. Obligate coreceptor of all odorant receptors. Orco is a universal and integral part of the functional odorant receptor, involved in the dendritic localization of other olfactory receptors. Can form functional ion channels in the absence of an odor-binding odorant receptor. Plays a central role in the perception of olfactory stimuli in ants and is essential for ant social organization. Required for pheromone sensing and mating behavior. Also required for the development and maintenance of odorant receptor neurons (ORNs) and of antennal lobe glomeruli. In Harpegnathos saltator (Jerdon's jumping ant), this protein is Odorant receptor coreceptor.